A 222-amino-acid polypeptide reads, in one-letter code: Ribosomal RNA small subunit methyltransferase G (222 aa).

S-adenosyl-L-methionine-binding positions include G80, L85, 131–132 (VE), and R148.

Belongs to the methyltransferase superfamily. RNA methyltransferase RsmG family.

The protein resides in the cytoplasm. It catalyses the reaction guanosine(527) in 16S rRNA + S-adenosyl-L-methionine = N(7)-methylguanosine(527) in 16S rRNA + S-adenosyl-L-homocysteine. Specifically methylates the N7 position of guanine in position 527 of 16S rRNA. The polypeptide is Ribosomal RNA small subunit methyltransferase G (Polynucleobacter asymbioticus (strain DSM 18221 / CIP 109841 / QLW-P1DMWA-1) (Polynucleobacter necessarius subsp. asymbioticus)).